Consider the following 598-residue polypeptide: Nicotinamide riboside transporter 1 (598 aa).

The next 11 membrane-spanning stretches (helical) occupy residues 48–68, 71–91, 112–132, 174–194, 197–217, 241–261, 273–293, 372–392, 395–415, 447–467, and 484–504; these read LAYWGAVSFTAGTWMSGSAAL, GLSYPETIVSFLLGNVLTIIF, FVFGIYGSAFGIIIRILMSIV, LVGFIIFHVLTALCYFMKPYH, YLLIWSCVATCFAMLGIVIYL, AWAWVYMISYWFGSISPGSTN, LAIWTGSVCALLIPATLVPIF, GALFCACISWACLPWNFYNSS, FLTVMSSFGVVMTPIIAVMIC, AIVAWVCGMAPGLPGIAWEVN, and SFFSFLISFFVYWGLCVFFPF. Ser560 and Ser572 each carry phosphoserine.

The protein belongs to the purine-cytosine permease (2.A.39) family.

Its subcellular location is the cell membrane. Functionally, high-affinity pH-dependent nicotinamide riboside transporter which also transports thiamine with low affinity. Involved in 5-fluorocytosine sensitivity. The protein is Nicotinamide riboside transporter 1 (NRT1) of Saccharomyces cerevisiae (strain ATCC 204508 / S288c) (Baker's yeast).